The following is a 503-amino-acid chain: ATP synthase subunit alpha (503 aa).

Gly170–Thr177 contacts ATP.

Belongs to the ATPase alpha/beta chains family. As to quaternary structure, F-type ATPases have 2 components, CF(1) - the catalytic core - and CF(0) - the membrane proton channel. CF(1) has five subunits: alpha(3), beta(3), gamma(1), delta(1), epsilon(1). CF(0) has three main subunits: a(1), b(2) and c(9-12). The alpha and beta chains form an alternating ring which encloses part of the gamma chain. CF(1) is attached to CF(0) by a central stalk formed by the gamma and epsilon chains, while a peripheral stalk is formed by the delta and b chains.

It is found in the cell inner membrane. The enzyme catalyses ATP + H2O + 4 H(+)(in) = ADP + phosphate + 5 H(+)(out). Produces ATP from ADP in the presence of a proton gradient across the membrane. The alpha chain is a regulatory subunit. This Helicobacter acinonychis (strain Sheeba) protein is ATP synthase subunit alpha.